A 32-amino-acid chain; its full sequence is Apolipophorin-3 (32 aa).

The interval 1–32 is disordered; the sequence is DAPSTTPPQDXEKKAAEFQKTFTEQXNQLANK. The span at 20–32 shows a compositional bias: polar residues; the sequence is KTFTEQXNQLANK.

Belongs to the insect apolipophorin-3 family. In terms of assembly, equilibrium between a soluble monomer and a bound lipoprotein form. Apolipophorin-3 associates with lipophorin during lipid loading until each particle contains 9 or 14 molecules of apolipophorin-3. In terms of tissue distribution, hemolymph.

The protein localises to the secreted. In terms of biological role, assists in the loading of diacylglycerol, generated from triacylglycerol stores in the fat body through the action of adipokinetic hormone, into lipophorin, the hemolymph lipoprotein. It increases the lipid carrying capacity of lipophorin by covering the expanding hydrophobic surface resulting from diacylglycerol uptake. It thus plays a critical role in the transport of lipids during flight in several species of insects. The protein is Apolipophorin-3 of Diatraea grandiosella (Southwestern corn borer).